The following is a 589-amino-acid chain: Zinc finger and BTB domain-containing protein 46 (589 aa).

A BTB domain is found at 31-99 (CDVCVVVEGK…MYSAHLALTS (69 aa)). The tract at residues 173-330 (RRTSPANSSG…ASSSDSRGER (158 aa)) is disordered. Basic and acidic residues predominate over residues 197-207 (GKEDQEPKADG). K229 is covalently cross-linked (Glycyl lysine isopeptide (Lys-Gly) (interchain with G-Cter in SUMO2)). The residue at position 234 (S234) is a Phosphoserine. The span at 305–325 (WPFSSRDSNADLSVTEASSSD) shows a compositional bias: polar residues. 2 consecutive C2H2-type zinc fingers follow at residues 418 to 436 (FKCPYCSFSAMHQCILKRH) and 446 to 468 (YPCEICGKKFTRREHMKRHTLVH). Residues 512-589 (PLDHGGGGGE…GPDKDFAWLS (78 aa)) are disordered. A compositionally biased stretch (acidic residues) spans 546-570 (EELGEDDEGLAPEDALLADDKDEED).

In terms of processing, sumoylated. Desumoylation by DESI1 reverses transcriptional repression activity.

The protein resides in the nucleus. In terms of biological role, functions as a transcriptional repressor for PRDM1. In Homo sapiens (Human), this protein is Zinc finger and BTB domain-containing protein 46 (ZBTB46).